The chain runs to 339 residues: Lipopolysaccharide 1,2-glucosyltransferase (339 aa).

UDP contacts are provided by residues 35-40 (GIDENY) and 132-133 (DA). Mg(2+) contacts are provided by Asp132 and Asp134. Short sequence motifs (DXD) lie at residues 132-134 (DAD) and 219-221 (DQD). Position 268 (His268) interacts with Mg(2+). 268 to 274 (HYTGITK) provides a ligand contact to UDP.

It belongs to the glycosyltransferase 8 family. Requires Mg(2+) as cofactor.

It localises to the cell inner membrane. It carries out the reaction UDP-glucose + [lipopolysaccharide] = UDP + D-glucosyl-[lipopolysaccharide].. It functions in the pathway bacterial outer membrane biogenesis; LPS core biosynthesis. Glucosyltransferase involved in the biosynthesis of the core oligosaccharide region of lipopolysaccharide (LPS). Catalyzes the addition of a glucose (glucose II) to the outer-core galactose I. Has a marked preference for its specific donor substrate, but it appears to have a relaxed specificity for alternate LPS acceptor residues, providing the overall size of the acceptor is conserved. The polypeptide is Lipopolysaccharide 1,2-glucosyltransferase (Escherichia coli).